We begin with the raw amino-acid sequence, 397 residues long: Phosphoglycerate kinase (397 aa).

Substrate is bound by residues 22–24 (DLN), Arg-37, 60–63 (HFGR), Arg-119, and Arg-152. Residues Lys-202, Glu-324, and 354–357 (GGDT) contribute to the ATP site.

The protein belongs to the phosphoglycerate kinase family. As to quaternary structure, monomer.

The protein resides in the cytoplasm. It carries out the reaction (2R)-3-phosphoglycerate + ATP = (2R)-3-phospho-glyceroyl phosphate + ADP. It participates in carbohydrate degradation; glycolysis; pyruvate from D-glyceraldehyde 3-phosphate: step 2/5. This Zymomonas mobilis subsp. mobilis (strain ATCC 31821 / ZM4 / CP4) protein is Phosphoglycerate kinase (pgk).